A 426-amino-acid chain; its full sequence is MLDAKLLRTDLDNIAQQLTKRNFVLDTEALSALEELRKAIQVKTQELQNERNTRSKSIGQAKARGEDIAPLLAHVSQLGNDLDAAKTEQDEVLAKIDAIASAIPNLLDDSVPEGKDEDDNVEVKRWGTPREFDFEVKDHVDLGFSVDKGLDFESGAKLAGTRFVVMRGKIARLHRAIAQFMLDTHTEEHGYQEMYVPYLVNAASLYGTGQLPKFGEDLFHTDLSNKKFSLIPTSEVPLTNLVRDEIVDEDDLPIKMTAHTPCFRSEAGSGGRDIRGLIRQHQFDKVEMVQIVKPETSMTALDELTRHAEIILEKLELPYRTVQLCSGDVGFSAAKTFDLEVWLPAQDTYREISSCSNMGAFQARRMQARFRNNETNKPELLHTLNGSGLAVGRTLVAILENYQQADGSINVPTVLQPYMGGLTNIG.

233-235 (TSE) is an L-serine binding site. 264–266 (RSE) is an ATP binding site. Glu-287 serves as a coordination point for L-serine. 351-354 (EISS) serves as a coordination point for ATP. Ser-387 provides a ligand contact to L-serine.

The protein belongs to the class-II aminoacyl-tRNA synthetase family. Type-1 seryl-tRNA synthetase subfamily. In terms of assembly, homodimer. The tRNA molecule binds across the dimer.

Its subcellular location is the cytoplasm. The enzyme catalyses tRNA(Ser) + L-serine + ATP = L-seryl-tRNA(Ser) + AMP + diphosphate + H(+). The catalysed reaction is tRNA(Sec) + L-serine + ATP = L-seryl-tRNA(Sec) + AMP + diphosphate + H(+). Its pathway is aminoacyl-tRNA biosynthesis; selenocysteinyl-tRNA(Sec) biosynthesis; L-seryl-tRNA(Sec) from L-serine and tRNA(Sec): step 1/1. Its function is as follows. Catalyzes the attachment of serine to tRNA(Ser). Is also able to aminoacylate tRNA(Sec) with serine, to form the misacylated tRNA L-seryl-tRNA(Sec), which will be further converted into selenocysteinyl-tRNA(Sec). This chain is Serine--tRNA ligase, found in Colwellia psychrerythraea (strain 34H / ATCC BAA-681) (Vibrio psychroerythus).